A 389-amino-acid chain; its full sequence is Pyruvylated Gal-beta-1,3-epitope synthesis protein 2 (389 aa).

Topologically, residues 1–16 (MTKLWVNFFSQKLLRL) are cytoplasmic. The chain crosses the membrane as a helical span at residues 17 to 37 (LIPSIIVVFAFAALFAIYSPI). The Lumenal portion of the chain corresponds to 38–389 (QLGGINFYKR…WSNSFDLITA (352 aa)).

It is found in the endoplasmic reticulum membrane. The protein localises to the golgi apparatus membrane. Its function is as follows. Involved in cell wall biogenesis. Has a role in the addition of Gal-beta1,3 moeities to galactomannans and their subsequent pyruvylation. Has a role in meiosis. The polypeptide is Pyruvylated Gal-beta-1,3-epitope synthesis protein 2 (pvg2) (Schizosaccharomyces pombe (strain 972 / ATCC 24843) (Fission yeast)).